The primary structure comprises 158 residues: UPF0725 protein At3g57210 (158 aa).

This sequence belongs to the UPF0725 (EMB2204) family.

The chain is UPF0725 protein At3g57210 from Arabidopsis thaliana (Mouse-ear cress).